Reading from the N-terminus, the 789-residue chain is MFNLIRKSTEWGGKTLVLESGKIARQANGAVVVTYGGTTVLSTVVAGKAKEPVDFLPLTVQFVAKSYAVGKIPGGFLKREGKPSDRETLISRLIDRSIRPLFPSGFYDEVSIVCNLLSYDTVTPPEVTALIGATAALAISGVPFNGMVVGARVGYLLSEDKYLLNASADEMLSSSLDLFLSGNKDSVLMVESEASELSESQMLGAISFGHQNCQEVIKLIEEFREESGILPFGFIPHDITSLVDDIASSYTESFSIAYSNIVKKERVLELEKLRDQVLSDMLAKYEQPNGNLQCQYSSQDIISALKSFERSLVRSKIIETSSRIDGRAFNGIRDIEIEIDVLPKTHGSALFTRGNTQALVVTALGTPQDEQIVDDLDGDRRENFLLHYNFPPYAVGESAALRAPGRREIGHGKLAWKAIRYVLPEKSDFPYTIRVVSEITESDGSSSMATVCGASLALMDTGVPIKAPVAGIAMGLIKEGEKFIILSDILGDEDHLGDMDFKVAGTSSGITALQMDMKISGISIEVIEKSLLQAKDGRMHILDKMNLVIQESRECIKNHAPRIESIFINKDKIRNVIGSGGKNIREICEKTGARVEIMQDGTVMIYAINNDAVEYAKNMIMDIVSEPEIGKVFDGTVIEIVKFGAFVSFLGGKRGLIHISEIKNEHINAVGSVISVNDKVKVLVIGIDREYVQLSMRRVDQETGEPIDGELYNIRKTNSDSDDSFLSSGSVNNRHGSEKKRRGSGRSRRSSGGSSYHRDDLHNNGFGNGNRSFNDNRNGNEVPRKPRFF.

Positions 494 and 500 each coordinate Mg(2+). Positions 561–620 (PRIESIFINKDKIRNVIGSGGKNIREICEKTGARVEIMQDGTVMIYAINNDAVEYAKNMI) constitute a KH domain. The region spanning 630–697 (GKVFDGTVIE…DREYVQLSMR (68 aa)) is the S1 motif domain. Residues 709 to 789 (GELYNIRKTN…NEVPRKPRFF (81 aa)) are disordered. The span at 737 to 749 (SEKKRRGSGRSRR) shows a compositional bias: basic residues. The span at 763-780 (NNGFGNGNRSFNDNRNGN) shows a compositional bias: low complexity.

This sequence belongs to the polyribonucleotide nucleotidyltransferase family. Requires Mg(2+) as cofactor.

Its subcellular location is the cytoplasm. The enzyme catalyses RNA(n+1) + phosphate = RNA(n) + a ribonucleoside 5'-diphosphate. Involved in mRNA degradation. Catalyzes the phosphorolysis of single-stranded polyribonucleotides processively in the 3'- to 5'-direction. The polypeptide is Polyribonucleotide nucleotidyltransferase (Ehrlichia ruminantium (strain Welgevonden)).